The sequence spans 424 residues: Histidine--tRNA ligase (424 aa).

It belongs to the class-II aminoacyl-tRNA synthetase family. In terms of assembly, homodimer.

It localises to the cytoplasm. The catalysed reaction is tRNA(His) + L-histidine + ATP = L-histidyl-tRNA(His) + AMP + diphosphate + H(+). This chain is Histidine--tRNA ligase, found in Shewanella piezotolerans (strain WP3 / JCM 13877).